The sequence spans 92 residues: Co-chaperonin GroES (92 aa).

This sequence belongs to the GroES chaperonin family. In terms of assembly, heptamer of 7 subunits arranged in a ring. Interacts with the chaperonin GroEL.

It is found in the cytoplasm. Functionally, together with the chaperonin GroEL, plays an essential role in assisting protein folding. The GroEL-GroES system forms a nano-cage that allows encapsulation of the non-native substrate proteins and provides a physical environment optimized to promote and accelerate protein folding. GroES binds to the apical surface of the GroEL ring, thereby capping the opening of the GroEL channel. The sequence is that of Co-chaperonin GroES from Methanosarcina barkeri (strain Fusaro / DSM 804).